The sequence spans 422 residues: Phosphoglycerate kinase (422 aa).

Substrate contacts are provided by residues 24–26 (DLN), 64–67 (HLGR), Arg129, and Arg171. Residues Lys222, Gly309, Glu340, and 370–373 (DIDT) each bind ATP.

This sequence belongs to the phosphoglycerate kinase family. In terms of assembly, monomer.

The protein resides in the cytoplasm. It carries out the reaction (2R)-3-phosphoglycerate + ATP = (2R)-3-phospho-glyceroyl phosphate + ADP. Its pathway is carbohydrate degradation; glycolysis; pyruvate from D-glyceraldehyde 3-phosphate: step 2/5. This Ureaplasma parvum serovar 3 (strain ATCC 700970) protein is Phosphoglycerate kinase (pgk).